Here is an 87-residue protein sequence, read N- to C-terminus: Phosphoribosyl-ATP pyrophosphatase (87 aa).

The protein belongs to the PRA-PH family.

It is found in the cytoplasm. It carries out the reaction 1-(5-phospho-beta-D-ribosyl)-ATP + H2O = 1-(5-phospho-beta-D-ribosyl)-5'-AMP + diphosphate + H(+). It functions in the pathway amino-acid biosynthesis; L-histidine biosynthesis; L-histidine from 5-phospho-alpha-D-ribose 1-diphosphate: step 2/9. This is Phosphoribosyl-ATP pyrophosphatase from Beutenbergia cavernae (strain ATCC BAA-8 / DSM 12333 / CCUG 43141 / JCM 11478 / NBRC 16432 / NCIMB 13614 / HKI 0122).